A 1009-amino-acid polypeptide reads, in one-letter code: Protein WBSCR14 homolog (1009 aa).

4 disordered regions span residues 1 to 20 (MSRG…PHDD), 304 to 354 (MSLG…LHQM), 488 to 531 (NNQP…DPMM), and 686 to 728 (ILES…EQEA). Polar residues-rich tracts occupy residues 324–350 (RTPT…SSAS) and 499–508 (RSNLLPTQND). Over residues 511–526 (LPQFLQSTQPTPQPQS) the composition is skewed to low complexity. The segment covering 686-695 (ILESPSTSGD) has biased composition (polar residues). The bHLH domain occupies 803–856 (RKRILHLHAEQNRRSALKDGFDQLMDIIPDLYSGGVKPTNAVVLAKSADHIRRL). Residues 856–877 (LQAEKWDKTQKIDEAKAKIEKL) form a leucine-zipper region.

Expressed in intestine, neurons, muscle, hypodermis, excretory cell and other tissues.

Its subcellular location is the nucleus. It is found in the cytoplasm. It localises to the mitochondrion. In terms of biological role, transcription factor that binds to the E box motif 5'-CACGTG-3', probably in a heterodimeric complex with mxl-2. Involved in modulating longevity in response to TOR signaling, dietary restriction, the decline in protein homeostasis associated with normal aging, germline signaling and the insulin-like signaling pathway. Plays a role in autophagy. Involved in regulating migration of the ray 1 precursor cells in the male tail, acting in concert with Wnt and semaphorin signaling pathways. Regulates transcription of genes encoding extracellular matrix (ECM) components which may contribute to the substratum required for migration of the neighboring ray 1 precursor cells. Involved in repressing infection by the microsporidian pathogen N.parisii, probably acting independently of its canonical partner, mxl-2. The chain is Protein WBSCR14 homolog (mml-1) from Caenorhabditis elegans.